The sequence spans 285 residues: MRRIAVIAKPQKDELASLLPELLAWLHGHGYDPVIDDIAATYTSEARIVPRADLPNENPELVIVLGGDGTLLAAARVFAKTGVPILSVNLGSLGFLTEVPLGDLYRHLEGWAQNCCNIEQRAMLHCELRRDGHQVCEYEALNDVVVSKGAIARMGDFRIDLDGALVAAFRADGVIISTPTGSTAYSLAANGPILAPNVDALIVTPVCPHLLTLRPLVVQGNADLKLKVAGIPDQTYLTVDGQEAIALCVGDEIHCRKSVYTVKLVRLGSTGFFDVLRAKLKWGER.

The active-site Proton acceptor is the Asp68. Residues 68-69, 142-143, Arg153, Arg170, Asp172, and Gln242 contribute to the NAD(+) site; these read DG and ND.

It belongs to the NAD kinase family. A divalent metal cation is required as a cofactor.

The protein resides in the cytoplasm. The catalysed reaction is NAD(+) + ATP = ADP + NADP(+) + H(+). In terms of biological role, involved in the regulation of the intracellular balance of NAD and NADP, and is a key enzyme in the biosynthesis of NADP. Catalyzes specifically the phosphorylation on 2'-hydroxyl of the adenosine moiety of NAD to yield NADP. This Acidobacterium capsulatum (strain ATCC 51196 / DSM 11244 / BCRC 80197 / JCM 7670 / NBRC 15755 / NCIMB 13165 / 161) protein is NAD kinase.